The primary structure comprises 351 residues: DNA polymerase IV (351 aa).

Residues 4–185 form the UmuC domain; sequence IIHVDMDCFF…LPLAKIPGVG (182 aa). Mg(2+) contacts are provided by aspartate 8 and aspartate 103. Glutamate 104 is a catalytic residue.

Belongs to the DNA polymerase type-Y family. Monomer. Mg(2+) is required as a cofactor.

The protein localises to the cytoplasm. It carries out the reaction DNA(n) + a 2'-deoxyribonucleoside 5'-triphosphate = DNA(n+1) + diphosphate. In terms of biological role, poorly processive, error-prone DNA polymerase involved in untargeted mutagenesis. Copies undamaged DNA at stalled replication forks, which arise in vivo from mismatched or misaligned primer ends. These misaligned primers can be extended by PolIV. Exhibits no 3'-5' exonuclease (proofreading) activity. May be involved in translesional synthesis, in conjunction with the beta clamp from PolIII. This chain is DNA polymerase IV, found in Salmonella paratyphi B (strain ATCC BAA-1250 / SPB7).